Reading from the N-terminus, the 321-residue chain is Transaldolase (321 aa).

Lys132 acts as the Schiff-base intermediate with substrate in catalysis.

Belongs to the transaldolase family. Type 1 subfamily. In terms of assembly, homodimer.

Its subcellular location is the cytoplasm. The catalysed reaction is D-sedoheptulose 7-phosphate + D-glyceraldehyde 3-phosphate = D-erythrose 4-phosphate + beta-D-fructose 6-phosphate. The protein operates within carbohydrate degradation; pentose phosphate pathway; D-glyceraldehyde 3-phosphate and beta-D-fructose 6-phosphate from D-ribose 5-phosphate and D-xylulose 5-phosphate (non-oxidative stage): step 2/3. Its function is as follows. Transaldolase is important for the balance of metabolites in the pentose-phosphate pathway. In Rhizobium etli (strain CIAT 652), this protein is Transaldolase.